The sequence spans 394 residues: Elongation factor Tu (394 aa).

In terms of domain architecture, tr-type G spans 10-204 (KPHVNVGTIG…AVDSYIPQPE (195 aa)). Residues 19-26 (GHVDHGKT) are G1. 19–26 (GHVDHGKT) contributes to the GTP binding site. Position 26 (T26) interacts with Mg(2+). The G2 stretch occupies residues 60 to 64 (GITIS). Positions 81–84 (DCPG) are G3. Residues 81-85 (DCPGH) and 136-139 (NKCD) each bind GTP. The tract at residues 136 to 139 (NKCD) is G4. Positions 174–176 (SAV) are G5.

Belongs to the TRAFAC class translation factor GTPase superfamily. Classic translation factor GTPase family. EF-Tu/EF-1A subfamily. In terms of assembly, monomer.

The protein localises to the cytoplasm. It catalyses the reaction GTP + H2O = GDP + phosphate + H(+). GTP hydrolase that promotes the GTP-dependent binding of aminoacyl-tRNA to the A-site of ribosomes during protein biosynthesis. The protein is Elongation factor Tu of Akkermansia muciniphila (strain ATCC BAA-835 / DSM 22959 / JCM 33894 / BCRC 81048 / CCUG 64013 / CIP 107961 / Muc).